The chain runs to 190 residues: Tegument antigen (190 aa).

2 EF-hand domains span residues 8-43 (SQMEEFIRAFLEIDADSNEMIDKQELIKYCQKYRLD) and 51-77 (IARFDTDKDNKISIEEFCRGFGLKVSE). Ca(2+) is bound by residues aspartate 55, aspartate 57, aspartate 59, lysine 61, and glutamate 66.

Adult and schistosomula tegument.

The protein is Tegument antigen of Schistosoma mansoni (Blood fluke).